A 219-amino-acid chain; its full sequence is MEKKITGYTTVDISQWHRKEHFEAFQSVAQCTYNQTVQLDITAFLKTVKKNKHKFYPAFIHILARLMNAHPEFRMAMKDGELVIWDSVHPCYTVFHEQTETFSSLWSEYHDDFRQFLHIYSQDVACYGENLAYFPKGFIENMFFVSANPWVSFTSFDLNVAAMDNFFAPVFTMGKYYTQGDKVLMPLAIQVHHAVCDGFHVGRMLNELQQYCDEWQGGA.

Histidine 193 acts as the Proton acceptor in catalysis.

This sequence belongs to the chloramphenicol acetyltransferase family. Homotrimer.

The catalysed reaction is chloramphenicol + acetyl-CoA = chloramphenicol 3-acetate + CoA. In terms of biological role, this enzyme is an effector of chloramphenicol resistance in bacteria. The protein is Chloramphenicol acetyltransferase (cat) of Klebsiella sp.